Reading from the N-terminus, the 276-residue chain is tRNA dimethylallyltransferase (276 aa).

Positions 9 to 12 (DSLS) are interaction with substrate tRNA.

The protein belongs to the IPP transferase family. Monomer. Mg(2+) serves as cofactor.

The catalysed reaction is adenosine(37) in tRNA + dimethylallyl diphosphate = N(6)-dimethylallyladenosine(37) in tRNA + diphosphate. Its function is as follows. Catalyzes the transfer of a dimethylallyl group onto the adenine at position 37 in tRNAs that read codons beginning with uridine, leading to the formation of N6-(dimethylallyl)adenosine (i(6)A). The polypeptide is tRNA dimethylallyltransferase (miaA) (Helicobacter pylori (strain G27)).